The sequence spans 552 residues: Glutathione reductase, chloroplastic/mitochondrial (552 aa).

A chloroplast and mitochondrion-targeting transit peptide spans 1–60 (MNQAMATPLSLSCCSPTLTRSTLFFTKTFPFSRSFSTPLPLSTKTLISLSPPHRTFAVRA). 6 residues coordinate FAD: serine 83, glycine 84, glutamate 103, threonine 120, cysteine 121, and lysine 129. Serine 83 contributes to the glutathione binding site. Cysteine 121 and cysteine 126 are oxidised to a cystine. Residue tyrosine 178 coordinates glutathione. Residue glycine 194 participates in FAD binding. NADP(+) is bound by residues glycine 254, isoleucine 257, glutamate 260, arginine 277, arginine 283, and glycine 341. 2 residues coordinate FAD: aspartate 382 and threonine 390. Alanine 420 is a binding site for NADP(+). An FAD-binding site is contributed by histidine 515. Histidine 515 serves as the catalytic Proton acceptor. Residues 527–552 (TPTRKVRKNQASQGKSDSKAKAVAGS) are disordered.

This sequence belongs to the class-I pyridine nucleotide-disulfide oxidoreductase family. In terms of assembly, homodimer. Requires FAD as cofactor.

Its subcellular location is the plastid. The protein resides in the chloroplast. It is found in the mitochondrion. The enzyme catalyses 2 glutathione + NADP(+) = glutathione disulfide + NADPH + H(+). Its function is as follows. Catalyzes the reduction of glutathione disulfide (GSSG) to reduced glutathione (GSH). Maintains high levels of GSH in the chloroplast. This Pisum sativum (Garden pea) protein is Glutathione reductase, chloroplastic/mitochondrial (GR).